The chain runs to 332 residues: MGDSLWRYYFGVLVIACKVNLSRALILDSIYWNTTNTKFVPGQGLVLYPQIGDKMDIVCPRVEGGSMEGVEYYKLYMVPLEQLKSCQVTKADTPLLNCVKPDQDVKFTLKFQEFSPNLWGLEFFRGKDYYIISTSNGTMEGLDNQEGGVCKTKSMKIIMKVGQNPSDPISPKDYPTSYPPKHPDLGGKDSKSNEVLKPDASPHGEDKGDGNKSSSVIGSEVALFACIASASVIVIIIIIMLVFLLLKYRRRHRKHSPQHATTLSLSTLATPKRGGSGGNNNGSEPSDIIIPLRTADSVFCPHYEKVSGDYGHPVYIVQEMPPQSPANIYYKV.

A signal peptide spans 1-24 (MGDSLWRYYFGVLVIACKVNLSRA). N-linked (GlcNAc...) asparagine glycosylation is found at N20 and N33. Residues 25-161 (LILDSIYWNT…TKSMKIIMKV (137 aa)) form the Ephrin RBD domain. The Extracellular portion of the chain corresponds to 25–225 (LILDSIYWNT…VIGSEVALFA (201 aa)). Cystine bridges form between C59-C98 and C86-C150. N136 carries N-linked (GlcNAc...) asparagine glycosylation. The interval 162–212 (GQNPSDPISPKDYPTSYPPKHPDLGGKDSKSNEVLKPDASPHGEDKGDGNK) is disordered. Positions 181–210 (KHPDLGGKDSKSNEVLKPDASPHGEDKGDG) are enriched in basic and acidic residues. N211 carries an N-linked (GlcNAc...) asparagine glycan. The chain crosses the membrane as a helical span at residues 226–246 (CIASASVIVIIIIIMLVFLLL). Residues 247-332 (KYRRRHRKHS…QSPANIYYKV (86 aa)) are Cytoplasmic-facing. The disordered stretch occupies residues 255 to 285 (HSPQHATTLSLSTLATPKRGGSGGNNNGSEP). The segment covering 260–270 (ATTLSLSTLAT) has biased composition (low complexity). The short motif at 330–332 (YKV) is the PDZ-binding element.

The protein belongs to the ephrin family. In terms of assembly, binds to the receptor tyrosine kinase ephb4. Post-translationally, inducible phosphorylation of tyrosine residues in the cytoplasmic domain.

It is found in the cell membrane. Functionally, cell surface transmembrane ligand for Eph receptors, a family of receptor tyrosine kinases which are crucial for migration, repulsion and adhesion during neuronal, vascular and epithelial development. Binds promiscuously Eph receptors residing on adjacent cells, leading to contact-dependent bidirectional signaling into neighboring cells. The signaling pathway downstream of the receptor is referred to as forward signaling while the signaling pathway downstream of the ephrin ligand is referred to as reverse signaling. Together with ephb4 may play a central role in heart morphogenesis and angiogenesis through regulation of cell adhesion and cell migration. The polypeptide is Ephrin-B2a (efnb2a) (Danio rerio (Zebrafish)).